We begin with the raw amino-acid sequence, 688 residues long: Potassium-transporting ATPase ATP-binding subunit (688 aa).

The next 4 helical transmembrane spans lie at 37–57, 65–85, 219–239, and 262–282; these read FLVYISSILTTVLYAVSLVGI, ILGITIILWITVLFANFAEAI, IALQILLISLTIIFLLVTVSL, and VALLVCLAPTTIGALLSSIGI. Residue D313 is the 4-aspartylphosphate intermediate of the active site. Residues D350, E354, 383-390, and K401 each bind ATP; that span reads FTAKTRMS. 2 residues coordinate Mg(2+): D524 and D528. The next 3 membrane-spanning stretches (helical) occupy residues 594 to 614, 622 to 642, and 668 to 688; these read FAIIPALFIGLYPGLSALNIM, AIFSAIIYNALIIVALIPLAL, and IIVPFIAIKVIDVLITAIGIV.

It belongs to the cation transport ATPase (P-type) (TC 3.A.3) family. Type IA subfamily. The system is composed of three essential subunits: KdpA, KdpB and KdpC.

The protein localises to the cell membrane. It catalyses the reaction K(+)(out) + ATP + H2O = K(+)(in) + ADP + phosphate + H(+). Functionally, part of the high-affinity ATP-driven potassium transport (or Kdp) system, which catalyzes the hydrolysis of ATP coupled with the electrogenic transport of potassium into the cytoplasm. This subunit is responsible for energy coupling to the transport system and for the release of the potassium ions to the cytoplasm. This Clostridium botulinum (strain Eklund 17B / Type B) protein is Potassium-transporting ATPase ATP-binding subunit.